Here is a 292-residue protein sequence, read N- to C-terminus: 1D-myo-inositol 2-acetamido-2-deoxy-alpha-D-glucopyranoside deacetylase (292 aa).

Positions 12, 15, and 147 each coordinate Zn(2+).

It belongs to the MshB deacetylase family. Zn(2+) is required as a cofactor.

It carries out the reaction 1D-myo-inositol 2-acetamido-2-deoxy-alpha-D-glucopyranoside + H2O = 1D-myo-inositol 2-amino-2-deoxy-alpha-D-glucopyranoside + acetate. Catalyzes the deacetylation of 1D-myo-inositol 2-acetamido-2-deoxy-alpha-D-glucopyranoside (GlcNAc-Ins) in the mycothiol biosynthesis pathway. The protein is 1D-myo-inositol 2-acetamido-2-deoxy-alpha-D-glucopyranoside deacetylase of Rhodococcus opacus (strain B4).